A 209-amino-acid chain; its full sequence is Uracil phosphoribosyltransferase (209 aa).

Residues Arg-79, Arg-104, and 131–139 (DPMLATGGS) contribute to the 5-phospho-alpha-D-ribose 1-diphosphate site. Residues Ile-194 and 199–201 (GDA) each bind uracil. Asp-200 contributes to the 5-phospho-alpha-D-ribose 1-diphosphate binding site.

The protein belongs to the UPRTase family. Mg(2+) serves as cofactor.

It carries out the reaction UMP + diphosphate = 5-phospho-alpha-D-ribose 1-diphosphate + uracil. It participates in pyrimidine metabolism; UMP biosynthesis via salvage pathway; UMP from uracil: step 1/1. With respect to regulation, allosterically activated by GTP. Functionally, catalyzes the conversion of uracil and 5-phospho-alpha-D-ribose 1-diphosphate (PRPP) to UMP and diphosphate. This chain is Uracil phosphoribosyltransferase, found in Clostridium perfringens (strain SM101 / Type A).